The sequence spans 127 residues: Lysozyme C (127 aa).

The 127-residue stretch at 1–127 folds into the C-type lysozyme domain; that stretch reads KDIPRCELVK…KDLSSYVRGC (127 aa). 4 disulfide bridges follow: Cys6–Cys127, Cys30–Cys115, Cys64–Cys80, and Cys76–Cys94. Catalysis depends on residues Glu35 and Asp52. Residues Lys82, Asp85, Asn87, Asp90, and Asp91 each coordinate Ca(2+).

Belongs to the glycosyl hydrolase 22 family. Monomer. It depends on Ca(2+) as a cofactor.

The protein resides in the secreted. The catalysed reaction is Hydrolysis of (1-&gt;4)-beta-linkages between N-acetylmuramic acid and N-acetyl-D-glucosamine residues in a peptidoglycan and between N-acetyl-D-glucosamine residues in chitodextrins.. Its function is as follows. Lysozymes have primarily a bacteriolytic function; those in tissues and body fluids are associated with the monocyte-macrophage system and enhance the activity of immunoagents. This Columba livia (Rock dove) protein is Lysozyme C (LYZ).